A 474-amino-acid chain; its full sequence is MSATRKSRAGDEPLPRPPRGAPHTSDQVLGPGVTYVVKYLGCIEVLRSMRSLDFSTRTQVTREAISRVCEAVPGAKGALKKRKPPSKMLSSILGKSNLQFAGMSISLTISTASLNLRTPDSKQIIANHHMRSISFASGGDPDTTDYVAYVAKDPVNRRACHILECCDGLAQDVIGSIGQAFELRFKQYLQCPSKVPALQDRMQSLDEPWTEEEGDGPDHPYYNSVPTKMPPPGGFLDARLKGRPHAPEAAQFAGKEQTYYQGRHLGDTFGEDWQRAPTRQGSLDIYSTAEGKTHMVPVGETPTYVNTQPVPPQVWPAATSSTESSPRKDLFDMKPFEDALRNQPLGPMLSKAASVECISPVTPRAPDARMLEELNAEPWYQGEMSRKEAEALLREDGDFLVRKSTTNPGSFVLTGMHNGQAKHLLLVDPEGTIRTKDRVFDSISHLINYHLESSLPIVSAGSELCLQQPVERKP.

The tract at residues 1 to 27 (MSATRKSRAGDEPLPRPPRGAPHTSDQ) is disordered. Positions 29 to 214 (LGPGVTYVVK…LDEPWTEEEG (186 aa)) constitute a PID domain. The interval 215–378 (DGPDHPYYNS…RMLEELNAEP (164 aa)) is CH1. Phosphoserine is present on Ser-282. The interval 308–328 (QPVPPQVWPAATSSTESSPRK) is disordered. In terms of domain architecture, SH2 spans 379 to 470 (WYQGEMSRKE…GSELCLQQPV (92 aa)).

Interacts with the Trk receptors in a phosphotyrosine-dependent manner. Once activated, binds to GRB2. Interacts with activated EGF receptors. Tyrosine phosphorylated. In terms of tissue distribution, predominantly expressed in the adult brain.

In terms of biological role, signaling adapter that couples activated growth factor receptors to signaling pathway in neurons. Involved in the signal transduction pathways of neurotrophin-activated Trk receptors in cortical neurons. The sequence is that of SHC-transforming protein 3 (Shc3) from Mus musculus (Mouse).